The primary structure comprises 657 residues: Glycogen debranching enzyme (657 aa).

Asp-336 (nucleophile) is an active-site residue. Catalysis depends on Glu-371, which acts as the Proton donor. The span at 458–467 shows a compositional bias: basic and acidic residues; that stretch reads NEANGEENRD. A disordered region spans residues 458–479; the sequence is NEANGEENRDGTNNNYSNNHGK.

Belongs to the glycosyl hydrolase 13 family.

It carries out the reaction Hydrolysis of (1-&gt;6)-alpha-D-glucosidic linkages to branches with degrees of polymerization of three or four glucose residues in limit dextrin.. Its pathway is glycan degradation; glycogen degradation. In terms of biological role, removes maltotriose and maltotetraose chains that are attached by 1,6-alpha-linkage to the limit dextrin main chain, generating a debranched limit dextrin. The protein is Glycogen debranching enzyme of Escherichia coli (strain K12 / DH10B).